The primary structure comprises 73 residues: Large ribosomal subunit protein bL32c (73 aa).

This sequence belongs to the bacterial ribosomal protein bL32 family.

Its subcellular location is the plastid. The protein resides in the chloroplast. In Jasminum nudiflorum (Winter jasmine), this protein is Large ribosomal subunit protein bL32c.